A 382-amino-acid polypeptide reads, in one-letter code: Carbamoyl phosphate synthase small chain (382 aa).

The CPSase stretch occupies residues 1–189; it reads MIKSALLVLE…ELPAAKNESE (189 aa). L-glutamine is bound by residues Ser47, Gly241, and Gly243. Residues 193–380 form the Glutamine amidotransferase type-1 domain; sequence HVVAYDYGVK…IDLIQTYRSS (188 aa). The active-site Nucleophile is the Cys269. Residues Leu270, Gln273, Asn311, Gly313, and Phe314 each contribute to the L-glutamine site. Catalysis depends on residues His353 and Glu355.

Belongs to the CarA family. In terms of assembly, composed of two chains; the small (or glutamine) chain promotes the hydrolysis of glutamine to ammonia, which is used by the large (or ammonia) chain to synthesize carbamoyl phosphate. Tetramer of heterodimers (alpha,beta)4.

The catalysed reaction is hydrogencarbonate + L-glutamine + 2 ATP + H2O = carbamoyl phosphate + L-glutamate + 2 ADP + phosphate + 2 H(+). It carries out the reaction L-glutamine + H2O = L-glutamate + NH4(+). It functions in the pathway amino-acid biosynthesis; L-arginine biosynthesis; carbamoyl phosphate from bicarbonate: step 1/1. The protein operates within pyrimidine metabolism; UMP biosynthesis via de novo pathway; (S)-dihydroorotate from bicarbonate: step 1/3. Its function is as follows. Small subunit of the glutamine-dependent carbamoyl phosphate synthetase (CPSase). CPSase catalyzes the formation of carbamoyl phosphate from the ammonia moiety of glutamine, carbonate, and phosphate donated by ATP, constituting the first step of 2 biosynthetic pathways, one leading to arginine and/or urea and the other to pyrimidine nucleotides. The small subunit (glutamine amidotransferase) binds and cleaves glutamine to supply the large subunit with the substrate ammonia. The chain is Carbamoyl phosphate synthase small chain from Pectobacterium atrosepticum (strain SCRI 1043 / ATCC BAA-672) (Erwinia carotovora subsp. atroseptica).